The following is a 251-amino-acid chain: Mediator of RNA polymerase II transcription subunit 7 (251 aa).

The disordered stretch occupies residues M1–H38. The span at A22–S32 shows a compositional bias: polar residues.

The protein belongs to the Mediator complex subunit 7 family. In terms of assembly, component of the Mediator complex. Interacts with mdt-10 and mdt-21. Interacts with RNA polymerase II.

It localises to the nucleus. Component of the Mediator complex, a coactivator involved in the regulated transcription of nearly all RNA polymerase II-dependent genes. Mediator functions as a bridge to convey information from gene-specific regulatory proteins to the basal RNA polymerase II transcription machinery. Mediator is recruited to promoters by direct interactions with regulatory proteins and serves as a scaffold for the assembly of a functional preinitiation complex with RNA polymerase II and the general transcription factors. Required for germ cell development and gonadal growth. The protein is Mediator of RNA polymerase II transcription subunit 7 (let-49) of Caenorhabditis elegans.